A 376-amino-acid chain; its full sequence is Pulmonary surfactant-associated protein B (376 aa).

Positions 1–24 are cleaved as a signal peptide; the sequence is MAKLHLQWLLLLPTLCSLGAATES. Positions 25 to 63 constitute a Saposin A-type domain; it reads ASSPDCAQGPKFWCQSLEQAIQCRALGHCLQEVWGHAGA. Residues 25–190 constitute a propeptide that is removed on maturation; it reads ASSPDCAQGP…PHTQDLSEQQ (166 aa). 3 Saposin B-type domains span residues 63–145, 194–271, and 290–365; these read ANDL…PLGQ, PLPF…STAD, and QDTE…EAPA. Intrachain disulfides connect cysteine 67/cysteine 141, cysteine 70/cysteine 135, cysteine 98/cysteine 110, cysteine 198/cysteine 267, cysteine 201/cysteine 261, cysteine 225/cysteine 236, cysteine 294/cysteine 361, cysteine 297/cysteine 355, and cysteine 320/cysteine 330. A propeptide spanning residues 270-376 is cleaved from the precursor; sequence ADAIGPALPA…PLQCFQTPHL (107 aa). Asparagine 306 is a glycosylation site (N-linked (GlcNAc...) asparagine).

In terms of assembly, homodimer; disulfide-linked.

It localises to the secreted. It is found in the extracellular space. The protein resides in the surface film. Its function is as follows. Pulmonary surfactant-associated proteins promote alveolar stability by lowering the surface tension at the air-liquid interface in the peripheral air spaces. SP-B increases the collapse pressure of palmitic acid to nearly 70 millinewtons per meter. The chain is Pulmonary surfactant-associated protein B (Sftpb) from Rattus norvegicus (Rat).